The sequence spans 245 residues: Tetraspanin-6 (245 aa).

Over Met-1 to Ser-19 the chain is Cytoplasmic. Residues Val-20–Ile-40 form a helical membrane-spanning segment. Over Trp-41–Asn-59 the chain is Extracellular. Residues Val-60–Phe-80 form a helical membrane-spanning segment. Residues Ala-81–Tyr-93 lie on the Cytoplasmic side of the membrane. A helical transmembrane segment spans residues Ala-94 to Phe-114. Residues Arg-115 to Glu-208 are Extracellular-facing. A glycan (N-linked (GlcNAc...) asparagine) is linked at Asn-134. A helical transmembrane segment spans residues Met-209 to Leu-229. Residues Ala-230 to Val-245 are Cytoplasmic-facing.

This sequence belongs to the tetraspanin (TM4SF) family.

The protein resides in the membrane. The sequence is that of Tetraspanin-6 (Tspan6) from Mus musculus (Mouse).